Consider the following 461-residue polypeptide: Cysteine--tRNA ligase (461 aa).

Cysteine 28 is a Zn(2+) binding site. The 'HIGH' region motif lies at 30–40 (ITVYDLCHIGH). Zn(2+)-binding residues include cysteine 209, histidine 234, and glutamate 238. Positions 266–270 (KMSKS) match the 'KMSKS' region motif. Residue lysine 269 coordinates ATP.

The protein belongs to the class-I aminoacyl-tRNA synthetase family. Monomer. Zn(2+) serves as cofactor.

Its subcellular location is the cytoplasm. It catalyses the reaction tRNA(Cys) + L-cysteine + ATP = L-cysteinyl-tRNA(Cys) + AMP + diphosphate. This is Cysteine--tRNA ligase from Klebsiella pneumoniae (strain 342).